The primary structure comprises 248 residues: 3-deoxy-manno-octulosonate cytidylyltransferase (248 aa).

This sequence belongs to the KdsB family.

The protein resides in the cytoplasm. It catalyses the reaction 3-deoxy-alpha-D-manno-oct-2-ulosonate + CTP = CMP-3-deoxy-beta-D-manno-octulosonate + diphosphate. Its pathway is nucleotide-sugar biosynthesis; CMP-3-deoxy-D-manno-octulosonate biosynthesis; CMP-3-deoxy-D-manno-octulosonate from 3-deoxy-D-manno-octulosonate and CTP: step 1/1. It functions in the pathway bacterial outer membrane biogenesis; lipopolysaccharide biosynthesis. Its function is as follows. Activates KDO (a required 8-carbon sugar) for incorporation into bacterial lipopolysaccharide in Gram-negative bacteria. In Escherichia fergusonii (strain ATCC 35469 / DSM 13698 / CCUG 18766 / IAM 14443 / JCM 21226 / LMG 7866 / NBRC 102419 / NCTC 12128 / CDC 0568-73), this protein is 3-deoxy-manno-octulosonate cytidylyltransferase.